Reading from the N-terminus, the 213-residue chain is Octanoyltransferase (213 aa).

In terms of domain architecture, BPL/LPL catalytic spans 32–207; it reads ENSHDEIWLV…NILALLNNPP (176 aa). Substrate contacts are provided by residues 71 to 78, 138 to 140, and 151 to 153; these read RGGQVTYH, SLG, and GLA. Catalysis depends on C169, which acts as the Acyl-thioester intermediate.

The protein belongs to the LipB family.

The protein resides in the cytoplasm. The enzyme catalyses octanoyl-[ACP] + L-lysyl-[protein] = N(6)-octanoyl-L-lysyl-[protein] + holo-[ACP] + H(+). Its pathway is protein modification; protein lipoylation via endogenous pathway; protein N(6)-(lipoyl)lysine from octanoyl-[acyl-carrier-protein]: step 1/2. Functionally, catalyzes the transfer of endogenously produced octanoic acid from octanoyl-acyl-carrier-protein onto the lipoyl domains of lipoate-dependent enzymes. Lipoyl-ACP can also act as a substrate although octanoyl-ACP is likely to be the physiological substrate. The protein is Octanoyltransferase of Salmonella typhi.